Here is a 39-residue protein sequence, read N- to C-terminus: Photosystem II reaction center protein J (39 aa).

The chain crosses the membrane as a helical span at residues 9 to 29 (LWLVATVGGMAAITVLGIFIY).

Belongs to the PsbJ family. PSII is composed of 1 copy each of membrane proteins PsbA, PsbB, PsbC, PsbD, PsbE, PsbF, PsbH, PsbI, PsbJ, PsbK, PsbL, PsbM, PsbT, PsbX, PsbY, PsbZ, Psb30/Ycf12, at least 3 peripheral proteins of the oxygen-evolving complex and a large number of cofactors. It forms dimeric complexes.

The protein resides in the plastid. The protein localises to the chloroplast thylakoid membrane. In terms of biological role, one of the components of the core complex of photosystem II (PSII). PSII is a light-driven water:plastoquinone oxidoreductase that uses light energy to abstract electrons from H(2)O, generating O(2) and a proton gradient subsequently used for ATP formation. It consists of a core antenna complex that captures photons, and an electron transfer chain that converts photonic excitation into a charge separation. In Porphyra purpurea (Red seaweed), this protein is Photosystem II reaction center protein J.